A 380-amino-acid polypeptide reads, in one-letter code: Probable protein phosphatase 2C 34 (380 aa).

In terms of domain architecture, PPM-type phosphatase spans 32–335 (AAGEFSMAAA…DDISVIVVYL (304 aa)). Mn(2+) contacts are provided by Asp-66, Gly-67, Asp-267, and Asp-326.

The protein belongs to the PP2C family. Mg(2+) is required as a cofactor. Mn(2+) serves as cofactor.

The catalysed reaction is O-phospho-L-seryl-[protein] + H2O = L-seryl-[protein] + phosphate. It carries out the reaction O-phospho-L-threonyl-[protein] + H2O = L-threonyl-[protein] + phosphate. This chain is Probable protein phosphatase 2C 34 (BIPP2C2), found in Oryza sativa subsp. indica (Rice).